Here is a 59-residue protein sequence, read N- to C-terminus: Large ribosomal subunit protein uL30 (59 aa).

It belongs to the universal ribosomal protein uL30 family. In terms of assembly, part of the 50S ribosomal subunit.

This is Large ribosomal subunit protein uL30 from Solibacter usitatus (strain Ellin6076).